Here is a 300-residue protein sequence, read N- to C-terminus: ETS homologous factor (300 aa).

The region spanning 29 to 115 is the PNT domain; sequence STCNVSSGFF…SNLQHLKWNG (87 aa). Positions 183-202 are disordered; sequence ESPDMKKEQDPPAKCHTKKH. A compositionally biased stretch (basic and acidic residues) spans 185–195; the sequence is PDMKKEQDPPA. A DNA-binding region (ETS) is located at residues 207–289; it reads THLWEFIRDI…DGRRLVYKFG (83 aa).

The protein belongs to the ETS family.

It is found in the nucleus. Transcriptional activator that may play a role in regulating epithelial cell differentiation and proliferation. May act as a repressor for a specific subset of ETS/AP-1-responsive genes, and as a modulator of the nuclear response to mitogen-activated protein kinase signaling cascades. Binds to DNA sequences containing the consensus nucleotide core sequence GGAA. Involved in regulation of TNFRSF10B/DR5 expression through Ets-binding sequences on the TNFRSF10B/DR5 promoter. This chain is ETS homologous factor (EHF), found in Pan troglodytes (Chimpanzee).